The following is a 1159-amino-acid chain: MSEPRFVHLRVHSDFSMINGIAKVKPLIKACVDNHMVAMGLTDFTNFCGLVRFYGEALSAGVKPIIGADVLVRSELCGDEPFELTLLAKNNIGYHNITLLLSKAYERGYQDLPYLDQAWLAEHREGIIVLSGGHNGDVGKKLLKGHAAEIESAVAFYQDFFPDHFYLSLSRTGRYEEERYVSLALTLAEEKGLPVVATNDVLFLHEDDFEAHEIRVAIHDSYTLDDPKRPKLYTNQQYFRSEQEMCDLFADVPSALENTLLIAQRCNVTIRLGEYFLPQFPTGDLSTEDFLVKKSKEGLEERLKFLFPDEKVRQARRPEYDERLQVELDVINQMGFPGYFLIVMEFIQWSKDNDIPVGPGRGSGAGSLVAYALKITDLDPLEFDLLFERFLNPERVSMPDFDVDFCMDGRDRVIDHVAETYGRGAVSQIITFGTMAAKAVIRDVGRVLGHPYGFVDRISKLIPPDPGMTLAKAFAAEPQLQAVYDSDEEVKALIDMARKLEGVTRNAGKHAGGVVISPGLITDFSPLYCDSEGKHPVTHFDKNDVEYAGLVKFDFLGLRTLTIIKWALDMINTRLAKEGKPPVDIATIPLDDPASFELLKRSETTAVFQLESRGMKDLIKRLQPDCFEDIIALVALFRPGPLESGMVQNFIDRKHGNEVVAYPDPEYQHDSLKPILEPTYGVIVYQEQVMQIAQELAGYTLGGADLLRRAMGKKKPEEMAAQREIFEKGAIQKGVDGELAMKIFDLVEKFAGYGFNKSHSAAYALVSYQTLWLKTHYPAEFMAAVMTSEMDNTDKIVGLYDECLRMGLKVAPPDINTGKHHFSVNEYGEIVYGIGAIKGVGEGPIEALISAREQGGIFKDLFDLCARVDLKKINRRTFESLILSGAFDKLGPHRAALSKNLEDALKASDQHAKDAAMGQADMFGVLTESHEDVEKAYASTPRWSEKVILEGERETLGLYLSSHPISPYLKELAHYSATRLKDLVPNSRGQMSTVSGLLVSSRFAVTKKGNRLGIATLDDRSGRLDITLFGEALDKYADKLQKDTVIIVSGQVSFDEFSGGLKMSVRELMSLDEARSRYAKSLAICLSEENMKPTFIRELKALLTPYSGGTLPIYVYYASTAGQCRVKMGVQWSVNPTDQLFTELAEKLGENAVELEFQS.

The protein belongs to the DNA polymerase type-C family. DnaE subfamily. In terms of assembly, DNA polymerase III contains a core (composed of alpha, epsilon and theta chains) that associates with a tau subunit. This core dimerizes to form the PolIII' complex. PolIII' associates with the gamma complex (composed of gamma, delta, delta', psi and chi chains) and with the beta chain to form the complete DNA polymerase III complex.

It localises to the cytoplasm. The enzyme catalyses DNA(n) + a 2'-deoxyribonucleoside 5'-triphosphate = DNA(n+1) + diphosphate. Functionally, DNA polymerase III is a complex, multichain enzyme responsible for most of the replicative synthesis in bacteria. This DNA polymerase also exhibits 3' to 5' exonuclease activity. The alpha chain is the DNA polymerase. This Pasteurella multocida (strain Pm70) protein is DNA polymerase III subunit alpha (dnaE).